A 324-amino-acid polypeptide reads, in one-letter code: uncharacterized protein (324 aa).

8 consecutive transmembrane segments (helical) span residues 4-24 (GNKV…PEFM), 63-83 (AALL…EGIL), 106-128 (ALFY…ISFL), 132-151 (WQVQ…SHLL), 179-199 (LADI…AVTL), 209-229 (GLDG…LVIM), 246-266 (LETA…LYTL), and 282-302 (GTWK…GWFM).

The protein belongs to the TerC family.

It localises to the cell membrane. This is an uncharacterized protein from Bacillus subtilis (strain 168).